A 117-amino-acid polypeptide reads, in one-letter code: Large ribosomal subunit protein uL18 (117 aa).

It belongs to the universal ribosomal protein uL18 family. Part of the 50S ribosomal subunit; part of the 5S rRNA/L5/L18/L25 subcomplex. Contacts the 5S and 23S rRNAs.

In terms of biological role, this is one of the proteins that bind and probably mediate the attachment of the 5S RNA into the large ribosomal subunit, where it forms part of the central protuberance. This chain is Large ribosomal subunit protein uL18, found in Polynucleobacter necessarius subsp. necessarius (strain STIR1).